We begin with the raw amino-acid sequence, 414 residues long: Gamma-glutamyl phosphate reductase (414 aa).

This sequence belongs to the gamma-glutamyl phosphate reductase family.

The protein localises to the cytoplasm. The catalysed reaction is L-glutamate 5-semialdehyde + phosphate + NADP(+) = L-glutamyl 5-phosphate + NADPH + H(+). Its pathway is amino-acid biosynthesis; L-proline biosynthesis; L-glutamate 5-semialdehyde from L-glutamate: step 2/2. In terms of biological role, catalyzes the NADPH-dependent reduction of L-glutamate 5-phosphate into L-glutamate 5-semialdehyde and phosphate. The product spontaneously undergoes cyclization to form 1-pyrroline-5-carboxylate. The sequence is that of Gamma-glutamyl phosphate reductase from Thermoanaerobacter sp. (strain X514).